Consider the following 92-residue polypeptide: Beta-2-microglobulin (92 aa).

The Ig-like C1-type domain maps to 2–91; it reads PQIQVYTRHP…VSMKEPKTVN (90 aa). A disulfide bridge links Cys-22 with Cys-77.

The protein belongs to the beta-2-microglobulin family. As to quaternary structure, heterodimer of an alpha chain and a beta chain. Beta-2-microglobulin is the beta-chain of major histocompatibility complex class I molecules.

Its subcellular location is the secreted. In terms of biological role, component of the class I major histocompatibility complex (MHC). Involved in the presentation of peptide antigens to the immune system. In Mus caroli (Ryukyu mouse), this protein is Beta-2-microglobulin (B2m).